Here is a 116-residue protein sequence, read N- to C-terminus: Large ribosomal subunit protein uL24 (116 aa).

Residues 1–21 are disordered; the sequence is MATNNGAGKARHKFHVKKGDT.

Belongs to the universal ribosomal protein uL24 family. In terms of assembly, part of the 50S ribosomal subunit.

Its function is as follows. One of two assembly initiator proteins, it binds directly to the 5'-end of the 23S rRNA, where it nucleates assembly of the 50S subunit. In terms of biological role, one of the proteins that surrounds the polypeptide exit tunnel on the outside of the subunit. The sequence is that of Large ribosomal subunit protein uL24 from Gloeobacter violaceus (strain ATCC 29082 / PCC 7421).